We begin with the raw amino-acid sequence, 183 residues long: Hypoxanthine/guanine phosphoribosyltransferase (183 aa).

This sequence belongs to the purine/pyrimidine phosphoribosyltransferase family. Archaeal HPRT subfamily. In terms of assembly, homodimer.

Its subcellular location is the cytoplasm. The enzyme catalyses IMP + diphosphate = hypoxanthine + 5-phospho-alpha-D-ribose 1-diphosphate. The catalysed reaction is GMP + diphosphate = guanine + 5-phospho-alpha-D-ribose 1-diphosphate. It functions in the pathway purine metabolism; IMP biosynthesis via salvage pathway; IMP from hypoxanthine: step 1/1. Its function is as follows. Catalyzes a salvage reaction resulting in the formation of IMP that is energically less costly than de novo synthesis. This is Hypoxanthine/guanine phosphoribosyltransferase from Methanocaldococcus vulcanius (strain ATCC 700851 / DSM 12094 / M7) (Methanococcus vulcanius).